The sequence spans 3330 residues: Laminin subunit alpha-3 (3330 aa).

The N-terminal stretch at 1–31 (MAVALGRAPRSLPLLLTLLLLLLLRMSPSWS) is a signal peptide. The region spanning 40–295 (SSRSLHPPYF…SIKDISVGGR (256 aa)) is the Laminin N-terminal domain. Asn-139 carries an N-linked (GlcNAc...) asparagine glycan. Residues 295–725 (RCVCNGHAEA…NNYYFPDLHH (431 aa)) are domain V. 27 cysteine pairs are disulfide-bonded: Cys-296–Cys-305, Cys-298–Cys-316, Cys-318–Cys-327, Cys-330–Cys-350, Cys-353–Cys-362, Cys-355–Cys-387, Cys-390–Cys-399, Cys-402–Cys-420, Cys-423–Cys-433, Cys-425–Cys-440, Cys-442–Cys-451, Cys-454–Cys-464, Cys-488–Cys-500, Cys-490–Cys-506, Cys-508–Cys-517, Cys-520–Cys-530, Cys-533–Cys-545, Cys-535–Cys-552, Cys-554–Cys-563, Cys-566–Cys-583, Cys-628–Cys-642, Cys-630–Cys-649, Cys-651–Cys-660, Cys-663–Cys-678, Cys-681–Cys-693, Cys-683–Cys-700, and Cys-702–Cys-711. Laminin EGF-like domains follow at residues 296–350 (CVCN…HNEC), 353–420 (CNCH…LHGC), 423–464 (CSCD…FPFC), 488–530 (CDCN…FPIC), 533–576 (CQCS…FPYC), 582–625 (VCHP…PRGC), 628–678 (CQCH…YFGC), and 681–725 (CQCD…DLHH). Asn-445 carries N-linked (GlcNAc...) asparagine glycosylation. Residues 793–1262 (TEAISGRITL…VAFYHNGAIP (470 aa)) are domain IV 1 (domain IV B). A domain III B region spans residues 1263–1462 (CECDPAGTAG…CFCFGVNTDC (200 aa)). Intrachain disulfides connect Cys-1309–Cys-1316, Cys-1311–Cys-1323, Cys-1325–Cys-1334, Cys-1337–Cys-1350, Cys-1353–Cys-1368, Cys-1355–Cys-1375, Cys-1377–Cys-1386, Cys-1389–Cys-1399, Cys-1402–Cys-1414, Cys-1404–Cys-1421, Cys-1423–Cys-1432, and Cys-1435–Cys-1450. 3 Laminin EGF-like domains span residues 1309-1352 (CNCG…GCDV), 1353-1401 (CNCS…ECVP), and 1402-1452 (CSCN…GCTK). N-linked (GlcNAc...) asparagine glycosylation occurs at Asn-1354. Positions 1453–1462 (CFCFGVNTDC) constitute a Laminin EGF-like 12; first part domain. The Laminin IV type A domain occupies 1466-1650 (HKQRAKFVDM…SGPRAHLVEM (185 aa)). Residues 1651–1683 (CACPPDYTGDSCQGCRPGYYWDNKSLPVGRCVP) form the Laminin EGF-like 12; second part domain. A domain III A region spans residues 1651–1818 (CACPPDYTGD…DGSPAEECDD (168 aa)). Residue Asn-1673 is glycosylated (N-linked (GlcNAc...) asparagine). 8 disulfides stabilise this stretch: Cys-1684–Cys-1693, Cys-1686–Cys-1700, Cys-1703–Cys-1712, Cys-1715–Cys-1728, Cys-1731–Cys-1743, Cys-1733–Cys-1752, Cys-1754–Cys-1763, and Cys-1766–Cys-1781. 2 consecutive Laminin EGF-like domains span residues 1684 to 1730 (CNCN…SCRV) and 1731 to 1783 (CPCP…SCQP). The Laminin EGF-like 15; truncated domain occupies 1784-1818 (CNCNSNGQLGPCDPLTGDCVNQEPKDGSPAEECDD). The tract at residues 1819–2385 (CDSCVMTLLN…ARDAANKVAI (567 aa)) is domain II and I. Coiled coils occupy residues 1851 to 1980 (TGAL…LRSR), 2012 to 2057 (VENN…HENE), 2088 to 2165 (LLQT…GDEL), and 2211 to 2238 (KRAKTLSSDSEELLNEAKMTQKRLQQVS). Asn-2159 carries N-linked (GlcNAc...) asparagine glycosylation. Asn-2261 carries an N-linked (GlcNAc...) asparagine glycan. Residues 2274–2276 (RGD) carry the Cell attachment site motif. Residues 2318–2383 (SARREDFSKA…QQARDAANKV (66 aa)) are a coiled coil. Asn-2332, Asn-2361, Asn-2498, Asn-2580, and Asn-2747 each carry an N-linked (GlcNAc...) asparagine glycan. Laminin G-like domains follow at residues 2386–2587 (PMRF…VEPC), 2594–2756 (SDKN…TKKC), 2763–2923 (VRTA…LGGC), 2983–3147 (ALQF…VSPC), and 3154–3327 (KGIY…LNGC). 3 disulfide bridges follow: Cys-2557/Cys-2587, Cys-2733/Cys-2756, and Cys-2891/Cys-2923. Residue Asn-3094 is glycosylated (N-linked (GlcNAc...) asparagine). Cys-3124 and Cys-3147 are disulfide-bonded. A glycan (N-linked (GlcNAc...) asparagine) is linked at Asn-3270. A disulfide bridge links Cys-3299 with Cys-3327.

Laminin is a complex glycoprotein, consisting of three different polypeptide chains (alpha, beta, gamma), which are bound to each other by disulfide bonds into a cross-shaped molecule comprising one long and three short arms with globules at each end. Alpha-3 is a subunit of laminin-5 (laminin-332 or epiligrin/kalinin/nicein), laminin-6 (laminin-311 or K-laminin) and laminin-7 (laminin-321 or KS-laminin). Basal membrane of the upper alimentary tract and urinary and nasal epithelia, salivary glands and teeth (both variants). Isoform A is predominantly expressed in skin, hair follicles and developing neurons of the trigeminal ganglion. Isoform B was found in bronchi, alveoli, stomach, intestinal crypts, whisker pads, CNS, telencephalic neuroectoderm, thalamus, Rathke pouch and periventricular subependymal germinal layer.

The protein localises to the secreted. It localises to the extracellular space. It is found in the extracellular matrix. Its subcellular location is the basement membrane. Functionally, binding to cells via a high affinity receptor, laminin is thought to mediate the attachment, migration and organization of cells into tissues during embryonic development by interacting with other extracellular matrix components. In terms of biological role, laminin-5 is thought to be involved in (1) cell adhesion via integrin alpha-3/beta-1 in focal adhesion and integrin alpha-6/beta-4 in hemidesmosomes, (2) signal transduction via tyrosine phosphorylation of pp125-FAK and p80, (3) differentiation of keratinocytes. This Mus musculus (Mouse) protein is Laminin subunit alpha-3 (Lama3).